The chain runs to 462 residues: Dipeptidyl peptidase 1 (462 aa).

The N-terminal stretch at 1–24 (MGPWTHSLRAALLLVLLGVCTVSS) is a signal peptide. Residues asparagine 29 and asparagine 53 are each glycosylated (N-linked (GlcNAc...) asparagine). 2 disulfide bridges follow: cysteine 30–cysteine 118 and cysteine 54–cysteine 136. A propeptide spanning residues 135 to 229 (ACFVGKKMAN…TDEIQQQILS (95 aa)) is cleaved from the precursor. Residue asparagine 144 is glycosylated (N-linked (GlcNAc...) asparagine). Disulfide bonds link cysteine 254-cysteine 297, cysteine 290-cysteine 330, and cysteine 320-cysteine 336. Cysteine 257 is an active-site residue. Asparagine 275 is a glycosylation site (N-linked (GlcNAc...) asparagine). Phenylalanine 301 and tyrosine 303 together coordinate chloride. Tyrosine 346 is a binding site for chloride. Active-site residues include histidine 404 and asparagine 426.

It belongs to the peptidase C1 family. As to quaternary structure, tetramer of heterotrimers consisting of exclusion domain, heavy- and light chains. Chloride is required as a cofactor. Broadly distributed, but higher levels found in liver, spleen, intestine, lung and kidney.

The protein localises to the lysosome. It catalyses the reaction Release of an N-terminal dipeptide, Xaa-Yaa-|-Zaa-, except when Xaa is Arg or Lys, or Yaa or Zaa is Pro.. In terms of biological role, thiol protease. Has dipeptidylpeptidase activity. Active against a broad range of dipeptide substrates composed of both polar and hydrophobic amino acids. Proline cannot occupy the P1 position and arginine cannot occupy the P2 position of the substrate. Can act as both an exopeptidase and endopeptidase. Activates serine proteases such as elastase, cathepsin G and granzymes A and B. This Rattus norvegicus (Rat) protein is Dipeptidyl peptidase 1 (Ctsc).